The following is a 286-amino-acid chain: Protein HEAT-STRESS-ASSOCIATED 32 (286 aa).

It belongs to the phosphosulfolactate synthase family.

Its function is as follows. Transactivator required, together with HSP101, for long-term acquired thermotolerance (LAT) maintenance, probably by regulating heat-inducible genes expression, thus being a cellular component of thermomemory. The sequence is that of Protein HEAT-STRESS-ASSOCIATED 32 from Arabidopsis thaliana (Mouse-ear cress).